The following is a 142-amino-acid chain: Baculoviral IAP repeat-containing protein 5 (142 aa).

Residues 18-88 form a BIR repeat; the sequence is RIYTFKNWPF…KHSPGCAFLT (71 aa). N6-acetyllysine is present on lysine 23. Threonine 34 carries the post-translational modification Phosphothreonine; by CDK1 and CDK15. Threonine 48 is subject to Phosphothreonine. The Zn(2+) site is built by cysteine 57, cysteine 60, histidine 77, and cysteine 84. Residues lysine 90, lysine 110, lysine 112, and lysine 115 each carry the N6-acetyllysine modification. Threonine 117 carries the post-translational modification Phosphothreonine; by AURKB.

It belongs to the IAP family. In terms of assembly, monomer or homodimer. Exists as a homodimer in the apo state and as a monomer in the CPC-bound state. The monomer protects cells against apoptosis more efficiently than the dimer. Only the dimeric form is capable of enhancing tubulin stability in cells. When phosphorylated, interacts with LAMTOR5/HBXIP; the resulting complex binds pro-CASP9, as well as active CASP9, but much less efficiently. Component of the chromosomal passenger complex (CPC) composed of at least BIRC5/survivin, CDCA8/borealin, INCENP, AURKB or AURKC; in the complex forms a triple-helix bundle-based subcomplex with INCENP and CDCA8. Interacts with JTB. Interacts (via BIR domain) with histone H3 phosphorylated at 'Thr-3' (H3pT3). Interacts with EVI5. Interacts with GTP-bound RAN in both the S and M phases of the cell cycle. Interacts with USP9X. Interacts with tubulin. Interacts with BIRC2/c-IAP1. The monomeric form interacts with XIAP/BIRC4. Both the dimeric and monomeric form can interact with DIABLO/SMAC. Interacts with BIRC6/bruce. Interacts with FBXL7; this interaction facilitates the polyubiquitination and subsequent proteasomal degradation of BIRC5 by the SCF(FBXL7) E3 ubiquitin-protein ligase complex. Ubiquitinated by the Cul9-RING ubiquitin-protein ligase complex, leading to its degradation. Ubiquitination is required for centrosomal targeting. Deubiquitinated by USP35 or USP38; leading to stabilization. Post-translationally, in vitro phosphorylation at Thr-117 by AURKB prevents interaction with INCENP and localization to mitotic chromosomes. Phosphorylation at Thr-48 by CK2 is critical for its mitotic and anti-apoptotic activities. Phosphorylation at Thr-34 by CDK15 is critical for its anti-apoptotic activity.

It localises to the cytoplasm. The protein localises to the nucleus. It is found in the chromosome. Its subcellular location is the centromere. The protein resides in the cytoskeleton. It localises to the spindle. The protein localises to the kinetochore. It is found in the midbody. Multitasking protein that has dual roles in promoting cell proliferation and preventing apoptosis. Component of a chromosome passage protein complex (CPC) which is essential for chromosome alignment and segregation during mitosis and cytokinesis. Acts as an important regulator of the localization of this complex; directs CPC movement to different locations from the inner centromere during prometaphase to midbody during cytokinesis and participates in the organization of the center spindle by associating with polymerized microtubules. Involved in the recruitment of CPC to centromeres during early mitosis via association with histone H3 phosphorylated at 'Thr-3' (H3pT3) during mitosis. The complex with RAN plays a role in mitotic spindle formation by serving as a physical scaffold to help deliver the RAN effector molecule TPX2 to microtubules. May counteract a default induction of apoptosis in G2/M phase. The acetylated form represses STAT3 transactivation of target gene promoters. May play a role in neoplasia. Inhibitor of CASP3 and CASP7. Essential for the maintenance of mitochondrial integrity and function. The sequence is that of Baculoviral IAP repeat-containing protein 5 (Birc5) from Rattus norvegicus (Rat).